The chain runs to 186 residues: Transposon Tn501 resolvase (186 aa).

The 134-residue stretch at 4 to 137 (HRIGYVRVSS…EGITLAKQRG (134 aa)) folds into the Resolvase/invertase-type recombinase catalytic domain. Ser12 (O-(5'-phospho-DNA)-serine intermediate) is an active-site residue. Positions 17–38 (NPERQLEQTQVSKVFTDKASGK) are disordered. The H-T-H motif DNA-binding region spans 164 to 183 (KAQLAREFNISRETLYQYLR).

Belongs to the site-specific recombinase resolvase family.

Functionally, resolvase catalyzes the resolution (a site-specific recombination) of the cointegrated replicon to yield the final transposition products. In Pseudomonas aeruginosa, this protein is Transposon Tn501 resolvase (tnpR).